The primary structure comprises 209 residues: Ribosomal RNA large subunit methyltransferase E (209 aa).

Residues Gly63, Trp65, Asp83, Asp99, and Asp124 each contribute to the S-adenosyl-L-methionine site. The active-site Proton acceptor is the Lys164.

Belongs to the class I-like SAM-binding methyltransferase superfamily. RNA methyltransferase RlmE family.

It is found in the cytoplasm. It carries out the reaction uridine(2552) in 23S rRNA + S-adenosyl-L-methionine = 2'-O-methyluridine(2552) in 23S rRNA + S-adenosyl-L-homocysteine + H(+). In terms of biological role, specifically methylates the uridine in position 2552 of 23S rRNA at the 2'-O position of the ribose in the fully assembled 50S ribosomal subunit. The protein is Ribosomal RNA large subunit methyltransferase E of Vibrio atlanticus (strain LGP32) (Vibrio splendidus (strain Mel32)).